A 428-amino-acid chain; its full sequence is MLKSVIENVHALEIFDSRGNPTVEVFVTLSNGVVGKAEVPSGASTGENEAVELRDGGSRLGGKGVMNAVNNVNTEINDALKGLDPHDQPNIDATMIALDGTPNKGRLGANAILGVSMATAAAAAKDNHQPLYRYLGGTDLEMPQTFHNVINGGEHADNGIDIQEFMITPVAKTSFRDGFEKIVNVYHTLKKVLEDMGYETGLGDEGGFAPNMKNSEEALKALHESIIKAGYKPGEDIAIACDCAASYFYNKEDGKYHLEGKVLTDEELADYYDKLLDEFPELISMEDPYDENDVEGMVKFTQSHKDRIQIVLDDFICTNPKLLNKAIHEGAGNASLIKLNQIGTVTETLETIRLSRKNGYNTMISHRSGETGDTFIADFAVAVNGGQLKTGAPARSERVEKYNRLLEIEEELGKGERLAFFPDNVDLD.

Gln-163 provides a ligand contact to (2R)-2-phosphoglycerate. Glu-205 acts as the Proton donor in catalysis. Residues Asp-242, Glu-286, and Asp-313 each coordinate Mg(2+). Lys-338, Arg-367, Ser-368, and Lys-389 together coordinate (2R)-2-phosphoglycerate. Lys-338 serves as the catalytic Proton acceptor.

It belongs to the enolase family. It depends on Mg(2+) as a cofactor.

The protein localises to the cytoplasm. It is found in the secreted. Its subcellular location is the cell surface. It carries out the reaction (2R)-2-phosphoglycerate = phosphoenolpyruvate + H2O. The protein operates within carbohydrate degradation; glycolysis; pyruvate from D-glyceraldehyde 3-phosphate: step 4/5. Functionally, catalyzes the reversible conversion of 2-phosphoglycerate (2-PG) into phosphoenolpyruvate (PEP). It is essential for the degradation of carbohydrates via glycolysis. This Lactobacillus johnsonii (strain CNCM I-12250 / La1 / NCC 533) protein is Enolase 3.